Reading from the N-terminus, the 606-residue chain is Sporulation kinase A (606 aa).

The PAS 1 domain occupies 3–73 (QDTQHVKPLQ…SYFYNEHHLM (71 aa)). In terms of domain architecture, PAC 1 spans 77 to 116 (FRFIKKDHTIVWVEAAVEIVTTRAERTEREIILKMKVLEE). One can recognise a PAS 2 domain in the interval 140-214 (YITDDYERLV…IRMQKGMEVG (75 aa)). One can recognise a PAC 2 domain in the interval 218-255 (QTWKRLDGTPVHLEVKASPTVYKNQQAELLLLIDISSR). The region spanning 265–335 (SRERYQLLIQ…ERIQNIAEQK (71 aa)) is the PAS 3 domain. Positions 402–606 (GIAHEIRNPL…TAFKISFPKK (205 aa)) constitute a Histidine kinase domain. Position 405 is a phosphohistidine; by autocatalysis (His-405).

It carries out the reaction ATP + protein L-histidine = ADP + protein N-phospho-L-histidine.. Phosphorylates the sporulation-regulatory proteins spo0A and spo0F. It also autophosphorylates in the presence of ATP. This chain is Sporulation kinase A (kinA), found in Bacillus subtilis (strain 168).